Here is a 348-residue protein sequence, read N- to C-terminus: MDLQTKLEQLFQQNNDTIKKVKSLDELNQIRVQLLGKKGPITGVLRGMKDLSAEERPKVGAFANKIRDDLSAVIEARKAQLEQAVINAKLASETVDVTLPGDPVEAGTPHIITQIMDDLEGFFMGMGYQVLTGPEVEEDHYNFEMMNIPKDHPARDMQETFYITNELLMRSQTSPMQARTMEKHDFTKGPLKMISPGVVYRRDDDDATHSHQFHQMEGLVIDKHITMADLKGTLLAMCQHVFGKDRTIRLRPSYFPFTEPSVEVDVSCFRCGGKGCPVCKYTGWIEVLGAGMVHPNVLRAANIDADVYGGFAFGLGPDRFAMLKYGIDDIRSFYTDDLRFLTQFSQEG.

Glutamate 259 serves as a coordination point for Mg(2+).

This sequence belongs to the class-II aminoacyl-tRNA synthetase family. Phe-tRNA synthetase alpha subunit type 1 subfamily. As to quaternary structure, tetramer of two alpha and two beta subunits. It depends on Mg(2+) as a cofactor.

It localises to the cytoplasm. It catalyses the reaction tRNA(Phe) + L-phenylalanine + ATP = L-phenylalanyl-tRNA(Phe) + AMP + diphosphate + H(+). This chain is Phenylalanine--tRNA ligase alpha subunit, found in Lacticaseibacillus paracasei (strain ATCC 334 / BCRC 17002 / CCUG 31169 / CIP 107868 / KCTC 3260 / NRRL B-441) (Lactobacillus paracasei).